We begin with the raw amino-acid sequence, 696 residues long: Interleukin-1 receptor accessory protein-like 1 (696 aa).

Positions 1–18 (MKAPIPHLILLYATFTQS) are cleaved as a signal peptide. Residues 19-134 (LKVVTKRGSA…YCMKVSISLT (116 aa)) enclose the Ig-like C2-type 1 domain. The Extracellular segment spans residues 19–357 (LKVVTKRGSA…LLHKRELMYT (339 aa)). Cystine bridges form between C31-C126 and C53-C118. N-linked (GlcNAc...) asparagine glycans are attached at residues N63, N122, and N138. 2 cysteine pairs are disulfide-bonded: C143-C185 and C164-C216. Ig-like C2-type domains lie at 143-232 (CYNS…TELT) and 242-350 (PKLL…VLLH). 3 N-linked (GlcNAc...) asparagine glycosylation sites follow: N213, N264, and N331. C267 and C334 form a disulfide bridge. The chain crosses the membrane as a helical span at residues 358 to 378 (VELAGGLGAILLLLVCLVTIY). Residues 379–696 (KCYKIEIMLF…RETSISSVIW (318 aa)) lie on the Cytoplasmic side of the membrane. Positions 403–559 (KDYDAYLSYT…KFWKRLQYEM (157 aa)) constitute a TIR domain. The active site involves E491. The tract at residues 549-644 (SKFWKRLQYE…TGTLPLTSIG (96 aa)) is interaction with NCS1. The disordered stretch occupies residues 659-680 (GQRPQTKSSREQNPDEAHTNSA). Residues 666–676 (SSREQNPDEAH) show a composition bias toward basic and acidic residues.

The protein belongs to the interleukin-1 receptor family. As to quaternary structure, homodimer. Interacts (calcium-independent) with NCS1. Interacts (via the first immunoglobilin domain) with PTPRD (via the second immunoglobilin domain); this interaction is PTPRD-splicing-dependent and induces pre- and post-synaptic differentiation of neurons and is required for IL1RAPL1-mediated synapse formation. Detected at low levels in heart, skeletal muscle, ovary, skin, amygdala, caudate nucleus, corpus callosum, hippocampus, substantia nigra and thalamus. Detected at very low levels in tonsil, prostate, testis, small intestine, placenta, colon and fetal liver.

It localises to the cell membrane. Its subcellular location is the cytoplasm. The protein localises to the cell projection. The protein resides in the axon. It is found in the dendrite. The enzyme catalyses NAD(+) + H2O = ADP-D-ribose + nicotinamide + H(+). Its function is as follows. May regulate secretion and presynaptic differentiation through inhibition of the activity of N-type voltage-gated calcium channel. May activate the MAP kinase JNK. Plays a role in neurite outgrowth. During dendritic spine formation can bidirectionally induce pre- and post-synaptic differentiation of neurons by trans-synaptically binding to PTPRD. The chain is Interleukin-1 receptor accessory protein-like 1 (IL1RAPL1) from Homo sapiens (Human).